The primary structure comprises 122 residues: Small ribosomal subunit protein uS13 (122 aa).

The disordered stretch occupies residues 95 to 122; the sequence is GLPVRGQRTKTNARTRKGPKKTIAGKKK.

Belongs to the universal ribosomal protein uS13 family. In terms of assembly, part of the 30S ribosomal subunit. Forms a loose heterodimer with protein S19. Forms two bridges to the 50S subunit in the 70S ribosome.

Functionally, located at the top of the head of the 30S subunit, it contacts several helices of the 16S rRNA. In the 70S ribosome it contacts the 23S rRNA (bridge B1a) and protein L5 of the 50S subunit (bridge B1b), connecting the 2 subunits; these bridges are implicated in subunit movement. Contacts the tRNAs in the A and P-sites. In Corynebacterium aurimucosum (strain ATCC 700975 / DSM 44827 / CIP 107346 / CN-1) (Corynebacterium nigricans), this protein is Small ribosomal subunit protein uS13.